Here is a 466-residue protein sequence, read N- to C-terminus: Histidine--tRNA ligase (466 aa).

This sequence belongs to the class-II aminoacyl-tRNA synthetase family. Homodimer.

It is found in the cytoplasm. The enzyme catalyses tRNA(His) + L-histidine + ATP = L-histidyl-tRNA(His) + AMP + diphosphate + H(+). In Bifidobacterium longum subsp. infantis (strain ATCC 15697 / DSM 20088 / JCM 1222 / NCTC 11817 / S12), this protein is Histidine--tRNA ligase.